A 161-amino-acid polypeptide reads, in one-letter code: Phosphopantetheine adenylyltransferase (161 aa).

Threonine 9 provides a ligand contact to substrate. ATP-binding positions include 9 to 10 (TF) and histidine 17. Lysine 41, leucine 73, and arginine 87 together coordinate substrate. ATP-binding positions include 88–90 (GLR), glutamate 98, and 123–129 (YQFISGT).

This sequence belongs to the bacterial CoaD family. As to quaternary structure, homohexamer. The cofactor is Mg(2+).

It localises to the cytoplasm. The catalysed reaction is (R)-4'-phosphopantetheine + ATP + H(+) = 3'-dephospho-CoA + diphosphate. It participates in cofactor biosynthesis; coenzyme A biosynthesis; CoA from (R)-pantothenate: step 4/5. In terms of biological role, reversibly transfers an adenylyl group from ATP to 4'-phosphopantetheine, yielding dephospho-CoA (dPCoA) and pyrophosphate. The polypeptide is Phosphopantetheine adenylyltransferase (Cupriavidus metallidurans (strain ATCC 43123 / DSM 2839 / NBRC 102507 / CH34) (Ralstonia metallidurans)).